The primary structure comprises 391 residues: NADH-quinone oxidoreductase subunit D (391 aa).

It belongs to the complex I 49 kDa subunit family. NDH-1 is composed of 14 different subunits. Subunits NuoB, C, D, E, F, and G constitute the peripheral sector of the complex.

It is found in the cell inner membrane. It catalyses the reaction a quinone + NADH + 5 H(+)(in) = a quinol + NAD(+) + 4 H(+)(out). NDH-1 shuttles electrons from NADH, via FMN and iron-sulfur (Fe-S) centers, to quinones in the respiratory chain. The immediate electron acceptor for the enzyme in this species is believed to be ubiquinone. Couples the redox reaction to proton translocation (for every two electrons transferred, four hydrogen ions are translocated across the cytoplasmic membrane), and thus conserves the redox energy in a proton gradient. This Rickettsia conorii (strain ATCC VR-613 / Malish 7) protein is NADH-quinone oxidoreductase subunit D.